The primary structure comprises 626 residues: Probable potassium transport system protein Kup (626 aa).

Helical transmembrane passes span 13 to 33, 53 to 73, 102 to 122, 138 to 158, 169 to 189, 207 to 227, 248 to 268, 277 to 297, 338 to 358, 367 to 387, 399 to 419, and 421 to 441; these read VALMMGALGVVYGDIGTSPLY, VLSILFWLLMVVVSFKYVLLI, FFVVLGIFGAALFYGDSMITP, HTLDPWIVPLALLVLLALFAI, LFGPVMVVWFATLGVLGGWQV, FVFEFPVMSFLLLGAVVLALT, WFSMVLPSLTLCYLGQGALLL, PFFLMAPEWGLAALVGLATVA, IYLPQVNALLLCAVLVLVITF, AYGFAVTGTMLMTSILAFAVL, WMLVLGVLLIIDVLLFSANIF, and IHEGGWMPLLVGVVVFTLMMT.

The protein belongs to the HAK/KUP transporter (TC 2.A.72) family.

The protein resides in the cell inner membrane. It catalyses the reaction K(+)(in) + H(+)(in) = K(+)(out) + H(+)(out). Its function is as follows. Transport of potassium into the cell. Likely operates as a K(+):H(+) symporter. This chain is Probable potassium transport system protein Kup, found in Bordetella avium (strain 197N).